Reading from the N-terminus, the 316-residue chain is Acetyl-coenzyme A carboxylase carboxyl transferase subunit alpha (316 aa).

Positions 39–293 (KLEEKNAQLT…KKHLQANLTN (255 aa)) constitute a CoA carboxyltransferase C-terminal domain.

The protein belongs to the AccA family. As to quaternary structure, acetyl-CoA carboxylase is a heterohexamer composed of biotin carboxyl carrier protein (AccB), biotin carboxylase (AccC) and two subunits each of ACCase subunit alpha (AccA) and ACCase subunit beta (AccD).

Its subcellular location is the cytoplasm. The enzyme catalyses N(6)-carboxybiotinyl-L-lysyl-[protein] + acetyl-CoA = N(6)-biotinyl-L-lysyl-[protein] + malonyl-CoA. It participates in lipid metabolism; malonyl-CoA biosynthesis; malonyl-CoA from acetyl-CoA: step 1/1. Functionally, component of the acetyl coenzyme A carboxylase (ACC) complex. First, biotin carboxylase catalyzes the carboxylation of biotin on its carrier protein (BCCP) and then the CO(2) group is transferred by the carboxyltransferase to acetyl-CoA to form malonyl-CoA. The sequence is that of Acetyl-coenzyme A carboxylase carboxyl transferase subunit alpha from Coxiella burnetii (strain CbuK_Q154) (Coxiella burnetii (strain Q154)).